Here is an 899-residue protein sequence, read N- to C-terminus: Protein argonaute (899 aa).

Residues 107 to 129 (TQKPKRRGGRAGGMRGNRGGPST) form a disordered region. The span at 116-125 (RAGGMRGNRG) shows a compositional bias: gly residues. In terms of domain architecture, PAZ spans 229–313 (SMCELLNENR…KQDDYCNSVL (85 aa)). The Piwi domain maps to 555–878 (LVVVVIPGPK…LSKFCGEILG (324 aa)).

The protein belongs to the argonaute family. Ago subfamily. As to quaternary structure, interacts with miR2. Highly specific binding to the mRNA m7G-cap. May be a component of the RNA-induced silencing complex (RISC), a sequence-specific, multicomponent nuclease that destroys or silences messenger RNAs homologous to the silencing trigger.

It localises to the cytoplasm. Plays an essential role in growth and, with Dicer, also involved in microRNA (miRNA)-mediated translational repression. The RNA interference pathway is implicated in antigenic variation having a role in regulation of variant-specific surface protein (VSP)-coding gene expression. Several VSP genes are transcribed but only transcripts encoding the VSP to be expressed accumulate. Antisense RNAs corresponding to the silenced VSP genes are detected. The chain is Protein argonaute from Giardia intestinalis (strain ATCC 50581 / GS clone H7) (Giardia lamblia).